A 131-amino-acid polypeptide reads, in one-letter code: Small ribosomal subunit protein uS8 (131 aa).

The protein belongs to the universal ribosomal protein uS8 family. In terms of assembly, part of the 30S ribosomal subunit. Contacts proteins S5 and S12.

In terms of biological role, one of the primary rRNA binding proteins, it binds directly to 16S rRNA central domain where it helps coordinate assembly of the platform of the 30S subunit. The chain is Small ribosomal subunit protein uS8 from Paraburkholderia xenovorans (strain LB400).